Consider the following 129-residue polypeptide: Small ribosomal subunit protein uS11 (129 aa).

The protein belongs to the universal ribosomal protein uS11 family. In terms of assembly, part of the 30S ribosomal subunit. Interacts with proteins S7 and S18. Binds to IF-3.

Located on the platform of the 30S subunit, it bridges several disparate RNA helices of the 16S rRNA. Forms part of the Shine-Dalgarno cleft in the 70S ribosome. The polypeptide is Small ribosomal subunit protein uS11 (Cereibacter sphaeroides (strain ATCC 17029 / ATH 2.4.9) (Rhodobacter sphaeroides)).